Here is a 493-residue protein sequence, read N- to C-terminus: Ferruginol synthase 1 (493 aa).

Residues 2–22 (DSFPLLAALFFILAATWFISF) form a helical membrane-spanning segment. Position 437 (Cys437) interacts with heme.

The protein belongs to the cytochrome P450 family. Heme serves as cofactor. In terms of tissue distribution, expressed in leaf glandular trichomes.

The protein resides in the membrane. It catalyses the reaction abieta-8,11,13-triene + reduced [NADPH--hemoprotein reductase] + O2 = ferruginol + oxidized [NADPH--hemoprotein reductase] + H2O + H(+). The enzyme catalyses ferruginol + reduced [NADPH--hemoprotein reductase] + O2 = 11-hydroxyferruginol + oxidized [NADPH--hemoprotein reductase] + H2O + H(+). The catalysed reaction is miltiradiene + 2 reduced [NADPH--hemoprotein reductase] + 2 O2 = 11-oxomiltiradiene + 2 oxidized [NADPH--hemoprotein reductase] + 3 H2O + 2 H(+). It functions in the pathway secondary metabolite biosynthesis; terpenoid biosynthesis. In terms of biological role, monooxygenase involved in the biosynthesis of labdane-related diterpenes natural products. Catalyzes the oxidation of abietatriene to produce ferruginol. Catalyzes the oxidation of ferruginol at C-12 to produce 11-hydroxyferruginol. Ferruginol and 11-hydroxyferruginol are intermediates in the biosynthesis of carnosate, a potent antioxidant. May also convert miltiradiene into 11-oxomiltiradiene. This Rosmarinus officinalis (Rosemary) protein is Ferruginol synthase 1.